A 153-amino-acid polypeptide reads, in one-letter code: Small heat shock protein ibp (153 aa).

The region spanning 35-153 is the sHSP domain; sequence KIISDSVPPY…KIQKIQINVK (119 aa).

This sequence belongs to the small heat shock protein (HSP20) family.

This is Small heat shock protein ibp (ibp) from Buchnera aphidicola subsp. Thelaxes suberi.